The chain runs to 367 residues: Cis-3-hydroxy-L-proline dehydratase (367 aa).

Residue Lys-165 is the Proton donor/acceptor of the active site. The Mg(2+) site is built by Asp-193, Glu-218, and Asp-241. The active-site Proton donor/acceptor is the Lys-265.

It belongs to the mandelate racemase/muconate lactonizing enzyme family. Mg(2+) is required as a cofactor.

The catalysed reaction is cis-3-hydroxy-L-proline = 1-pyrroline-2-carboxylate + H2O. Its function is as follows. Catalyzes the dehydration of cis-3-hydroxy-L-proline (c3LHyp) to Delta(1)-pyrroline-2-carboxylate (Pyr2C). Is likely involved in a degradation pathway that converts c3LHyp to L-proline, which allows L.aggregata to grow on c3LHyp as a sole carbon source. Also catalyzes the epimerization of c3LHyp to trans-3-hydroxy-D-proline (t3DHyp), a competing reaction occurring from the same enolate anion intermediate. L-proline, t3LHyp, t4LHyp, c4DHyp and their methylated derivatives are not substrates. The sequence is that of Cis-3-hydroxy-L-proline dehydratase from Roseibium aggregatum (strain ATCC 25650 / DSM 13394 / JCM 20685 / NBRC 16684 / NCIMB 2208 / IAM 12614 / B1) (Stappia aggregata).